A 336-amino-acid polypeptide reads, in one-letter code: Aromatic prenyltransferase (336 aa).

It belongs to the aromatic prenyltransferase family.

Prenyltransferase that attaches isoprenoid moieties to carbon atoms of aromatic substrates in an enzyme-catalyzed Friedel-Crafts reaction. Shows specificity for dimethylallyl diphosphate (DMAPP) and does not accept geranyl diphosphate (GPP) or isopentenyl diphosphate (IPP). Prenylates the artificial substrate 2,7-dihydroxynaphthalene (2,7-DHN), as well as dihydrophenazine-1-carboxylic acid at a lower level. Only traces of products are detected with aspulvinone E, flaviolin, or 4-hydroxybenzoic acid as substrates; and no product is formed with L-tryptophan, L-tyrosine, or 4-hydroxyphenylpyruvate. Ptf seems no to be involved in the prenylation reaction in the biosynthesis of aspulvinone H and J and the physiological function of ptf remains unknown. This chain is Aromatic prenyltransferase, found in Aspergillus terreus (strain NIH 2624 / FGSC A1156).